Here is a 194-residue protein sequence, read N- to C-terminus: dCTP deaminase (194 aa).

Residues 110-115, Asp128, 136-138, Tyr171, Lys178, and Gln182 each bind dCTP; these read RSSLAR and VLE. Residue Glu138 is the Proton donor/acceptor of the active site. Residues 172–194 are disordered; that stretch reads NKRKSAKYRDQQEAVASRISQDK.

This sequence belongs to the dCTP deaminase family. In terms of assembly, homotrimer.

It carries out the reaction dCTP + H2O + H(+) = dUTP + NH4(+). Its pathway is pyrimidine metabolism; dUMP biosynthesis; dUMP from dCTP (dUTP route): step 1/2. Its function is as follows. Catalyzes the deamination of dCTP to dUTP. This Shewanella loihica (strain ATCC BAA-1088 / PV-4) protein is dCTP deaminase.